The sequence spans 171 residues: Dual specificity protein phosphatase OPG106 (171 aa).

Residues 23–171 form the Tyrosine-protein phosphatase domain; sequence SPTIMTRVTN…IIEKYVIDKN (149 aa). Cys110 acts as the Phosphocysteine intermediate in catalysis.

This sequence belongs to the protein-tyrosine phosphatase family. Non-receptor class dual specificity subfamily. In terms of assembly, homodimer.

It localises to the virion. Its subcellular location is the host cytoplasm. The catalysed reaction is O-phospho-L-tyrosyl-[protein] + H2O = L-tyrosyl-[protein] + phosphate. It catalyses the reaction O-phospho-L-seryl-[protein] + H2O = L-seryl-[protein] + phosphate. Its function is as follows. Serine/tyrosine phosphatase which down-regulates cellular antiviral response by dephosphorylating activated host STAT1 and blocking interferon (IFN)-stimulated innate immune responses. Dephosphorylates the OPG144 protein. The chain is Dual specificity protein phosphatase OPG106 (OPG106) from Homo sapiens (Human).